A 44-amino-acid chain; its full sequence is Conotoxin Cl9a (44 aa).

4-carboxyglutamate occurs at positions 7, 8, and 24. 3 disulfide bridges follow: Cys-9–Cys-33, Cys-15–Cys-40, and Cys-23–Cys-42.

In terms of tissue distribution, expressed by the venom duct.

It is found in the secreted. The protein is Conotoxin Cl9a of Californiconus californicus (California cone).